The sequence spans 752 residues: Lid2 complex component jmj3 (752 aa).

In terms of domain architecture, JmjN spans 34–75 (IPVVEPKISEFVDMESFIRRVERLGKKYGAIKVVRPSSVLNP). The JmjC domain maps to 162 to 333 (YTNRPSIPFY…NYEFSNLRRL (172 aa)). Composition is skewed to polar residues over residues 391 to 402 (SFSQRDFDSPNS) and 409 to 423 (LMSN…HFNS). Positions 391–438 (SFSQRDFDSPNSINPPSPLMSNHESASTEHFNSTTTTEKELSSLHVGE) are disordered. Basic and acidic residues predominate over residues 427-438 (TEKELSSLHVGE).

Component of the Lid2 complex composed of ash2, jmj3, lid2, sdc1 and snt2.

It localises to the nucleus. The polypeptide is Lid2 complex component jmj3 (Schizosaccharomyces pombe (strain 972 / ATCC 24843) (Fission yeast)).